Consider the following 353-residue polypeptide: Delta-aminolevulinic acid dehydratase (353 aa).

K221 (schiff-base intermediate with substrate) is an active-site residue. Positions 231 and 244 each coordinate 5-aminolevulinate. E260 contacts Mg(2+). K275 acts as the Schiff-base intermediate with substrate in catalysis. 5-aminolevulinate contacts are provided by S301 and Y340.

Belongs to the ALAD family. In terms of assembly, homooctamer. Mg(2+) serves as cofactor.

The catalysed reaction is 2 5-aminolevulinate = porphobilinogen + 2 H2O + H(+). It participates in porphyrin-containing compound metabolism; protoporphyrin-IX biosynthesis; coproporphyrinogen-III from 5-aminolevulinate: step 1/4. In terms of biological role, catalyzes an early step in the biosynthesis of tetrapyrroles. Binds two molecules of 5-aminolevulinate per subunit, each at a distinct site, and catalyzes their condensation to form porphobilinogen. Required for nodule development. This is Delta-aminolevulinic acid dehydratase (hemB) from Bradyrhizobium diazoefficiens (strain JCM 10833 / BCRC 13528 / IAM 13628 / NBRC 14792 / USDA 110).